The primary structure comprises 327 residues: UPF0065 protein in gbd 5'region (327 aa).

Positions M1–A30 form a signal peptide, tat-type signal.

The protein belongs to the UPF0065 (bug) family. In terms of processing, predicted to be exported by the Tat system. The position of the signal peptide cleavage has not been experimentally proven.

The protein resides in the periplasm. The protein is UPF0065 protein in gbd 5'region of Cupriavidus necator (Alcaligenes eutrophus).